The chain runs to 99 residues: uncharacterized protein (99 aa).

This is an uncharacterized protein from Salmonella typhimurium (strain LT2 / SGSC1412 / ATCC 700720).